A 194-amino-acid chain; its full sequence is MSRVLALKSSILGDYSQSNKLVEDFIKNVDQDKLTVRDLAANPLPVLDFAVATALRATEDLSQEQQAVVDLSDTLIEEVKAADTLVIAAPMYNFTIPTQLKNWIDLIARAGVTFKYTENGVQGLIEGKKAIVVTTRGGIHKDSPTDNVTPYLRTVLGFVGITDVEFIYAEALNMGEDAASKGISDAQSQLATMA.

Residues S10, 16-18 (SQS), 91-94 (MYNF), and 135-138 (TRGG) each bind FMN.

Belongs to the azoreductase type 1 family. As to quaternary structure, homodimer. It depends on FMN as a cofactor.

The catalysed reaction is 2 a quinone + NADH + H(+) = 2 a 1,4-benzosemiquinone + NAD(+). It catalyses the reaction N,N-dimethyl-1,4-phenylenediamine + anthranilate + 2 NAD(+) = 2-(4-dimethylaminophenyl)diazenylbenzoate + 2 NADH + 2 H(+). In terms of biological role, quinone reductase that provides resistance to thiol-specific stress caused by electrophilic quinones. Its function is as follows. Also exhibits azoreductase activity. Catalyzes the reductive cleavage of the azo bond in aromatic azo compounds to the corresponding amines. In Vibrio parahaemolyticus serotype O3:K6 (strain RIMD 2210633), this protein is FMN-dependent NADH:quinone oxidoreductase.